The chain runs to 110 residues: Cytochrome c (110 aa).

Heme c-binding residues include cysteine 21, cysteine 24, histidine 25, and methionine 87.

Belongs to the cytochrome c family. Binds 1 heme c group covalently per subunit.

The protein resides in the mitochondrion intermembrane space. Electron carrier protein. The oxidized form of the cytochrome c heme group can accept an electron from the heme group of the cytochrome c1 subunit of cytochrome reductase. Cytochrome c then transfers this electron to the cytochrome oxidase complex, the final protein carrier in the mitochondrial electron-transport chain. This is Cytochrome c (CYCK) from Kluyveromyces lactis (strain ATCC 8585 / CBS 2359 / DSM 70799 / NBRC 1267 / NRRL Y-1140 / WM37) (Yeast).